A 156-amino-acid chain; its full sequence is MSMVVYNNQECEEGNPFAGALTEFSQWLWSRPLGNPGAEDAEEEAIAAQEELEFPEDEAQARHSCLQRTTSWATPKEVSPSGRVYQTVRHSRMEYSRPTMSIRSQASYFSSSARPLPPPPVPSLMSWTPIAKYHPSSPTSTSSKLRRAAPKLIKRG.

The homodimerization stretch occupies residues Ala-38–Phe-54. 2 disordered regions span residues Pro-55 to Pro-80 and Ala-131 to Gly-156. The segment at Asp-57 to Gly-156 is RNA-binding. Residues Ser-71, Ser-79, Ser-137, and Ser-140 each carry the phosphoserine modification. Over residues Lys-144–Gly-156 the composition is skewed to basic residues.

Belongs to the polerovirus movement protein family. As to quaternary structure, homodimer. Heterodimer with movement protein P3a. Post-translationally, expressed as a nonphosphorylated 20kDa form and a phosphorylated 22kDa form. Phosphorylated by a host PKC-related kinase. Serine phosphorylation is required for plamodesma targeting.

The protein resides in the host cell junction. It is found in the host plasmodesma. Its subcellular location is the host mitochondrion outer membrane. It localises to the host Golgi apparatus. The protein localises to the host chloroplast envelope. Its function is as follows. Together with movement protein P3a, facilitates long-distance movement of virions in host. Transports viral genome to neighboring plant cells directly through plasmosdesmata, without any budding. The movement protein allows efficient cell to cell propagation, by bypassing the host cell wall barrier. Binds ssRNA. This Solanum tuberosum (Potato) protein is Movement protein P17.